We begin with the raw amino-acid sequence, 216 residues long: FMN-dependent NADH:quinone oxidoreductase 3 (216 aa).

FMN-binding positions include Ser10 and 16-18 (SAS).

It belongs to the azoreductase type 1 family. In terms of assembly, homodimer. It depends on FMN as a cofactor.

The enzyme catalyses 2 a quinone + NADH + H(+) = 2 a 1,4-benzosemiquinone + NAD(+). It carries out the reaction N,N-dimethyl-1,4-phenylenediamine + anthranilate + 2 NAD(+) = 2-(4-dimethylaminophenyl)diazenylbenzoate + 2 NADH + 2 H(+). Functionally, quinone reductase that provides resistance to thiol-specific stress caused by electrophilic quinones. Its function is as follows. Also exhibits azoreductase activity. Catalyzes the reductive cleavage of the azo bond in aromatic azo compounds to the corresponding amines. This Pseudomonas fluorescens (strain ATCC BAA-477 / NRRL B-23932 / Pf-5) protein is FMN-dependent NADH:quinone oxidoreductase 3.